The sequence spans 266 residues: Endoplasmic reticulum vesicle protein 25 (266 aa).

Residues 1–26 (MGSSPQSSTRTLLGLLFLLLVQLSSA) form the signal peptide. Over 27-188 (LKFDLHASSG…TNESTNERVK (162 aa)) the chain is Lumenal. Residues 39–129 (ERCIRNFVFK…YKSVELDVEI (91 aa)) form the GOLD domain. The chain crosses the membrane as a helical span at residues 189-209 (WFAFGTMGMLVGLGVWQVVYL). The Cytoplasmic portion of the chain corresponds to 210-266 (RAYFRYVDFPVSWRVDGVVANCCSCCEQVEASYLRSSRVVFWSPLVMWTRLSWLILR).

Belongs to the EMP24/GP25L family.

The protein resides in the endoplasmic reticulum membrane. The protein localises to the golgi apparatus membrane. In terms of biological role, constituent of COPII-coated endoplasmic reticulum-derived transport vesicles. Required for efficient transport of a subset of secretory proteins to the Golgi. Facilitates retrograde transport from the Golgi to the endoplasmic reticulum. This Aspergillus fumigatus (strain ATCC MYA-4609 / CBS 101355 / FGSC A1100 / Af293) (Neosartorya fumigata) protein is Endoplasmic reticulum vesicle protein 25 (erv25).